A 157-amino-acid chain; its full sequence is SsrA-binding protein (157 aa).

The tract at residues 133–157 (LHDKRETEKKRDWSREKSRLLRARG) is disordered. Basic and acidic residues predominate over residues 135–151 (DKRETEKKRDWSREKSR).

The protein belongs to the SmpB family.

It localises to the cytoplasm. In terms of biological role, required for rescue of stalled ribosomes mediated by trans-translation. Binds to transfer-messenger RNA (tmRNA), required for stable association of tmRNA with ribosomes. tmRNA and SmpB together mimic tRNA shape, replacing the anticodon stem-loop with SmpB. tmRNA is encoded by the ssrA gene; the 2 termini fold to resemble tRNA(Ala) and it encodes a 'tag peptide', a short internal open reading frame. During trans-translation Ala-aminoacylated tmRNA acts like a tRNA, entering the A-site of stalled ribosomes, displacing the stalled mRNA. The ribosome then switches to translate the ORF on the tmRNA; the nascent peptide is terminated with the 'tag peptide' encoded by the tmRNA and targeted for degradation. The ribosome is freed to recommence translation, which seems to be the essential function of trans-translation. This is SsrA-binding protein from Afipia carboxidovorans (strain ATCC 49405 / DSM 1227 / KCTC 32145 / OM5) (Oligotropha carboxidovorans).